Here is a 425-residue protein sequence, read N- to C-terminus: Glutamate-1-semialdehyde 2,1-aminomutase (425 aa).

The residue at position 266 (Lys266) is an N6-(pyridoxal phosphate)lysine.

The protein belongs to the class-III pyridoxal-phosphate-dependent aminotransferase family. HemL subfamily. In terms of assembly, homodimer. Pyridoxal 5'-phosphate serves as cofactor.

It is found in the cytoplasm. It carries out the reaction (S)-4-amino-5-oxopentanoate = 5-aminolevulinate. It functions in the pathway porphyrin-containing compound metabolism; protoporphyrin-IX biosynthesis; 5-aminolevulinate from L-glutamyl-tRNA(Glu): step 2/2. The chain is Glutamate-1-semialdehyde 2,1-aminomutase from Nitratidesulfovibrio vulgaris (strain DSM 19637 / Miyazaki F) (Desulfovibrio vulgaris).